We begin with the raw amino-acid sequence, 210 residues long: Riboflavin kinase (210 aa).

Over residues 1-11 (MRPSNPRPPVT) the composition is skewed to pro residues. Residues 1–24 (MRPSNPRPPVTGPDSGPEAPFPIR) form a disordered region. 2 residues coordinate Mg(2+): Thr-44 and Asn-46. Residue Glu-113 is the Nucleophile of the active site.

Belongs to the flavokinase family. The cofactor is Zn(2+). Mg(2+) serves as cofactor.

The catalysed reaction is riboflavin + ATP = FMN + ADP + H(+). It participates in cofactor biosynthesis; FMN biosynthesis; FMN from riboflavin (ATP route): step 1/1. Its function is as follows. Catalyzes the phosphorylation of riboflavin (vitamin B2) to form flavin mononucleotide (FMN) coenzyme. The polypeptide is Riboflavin kinase (fmn1) (Emericella nidulans (strain FGSC A4 / ATCC 38163 / CBS 112.46 / NRRL 194 / M139) (Aspergillus nidulans)).